Here is a 266-residue protein sequence, read N- to C-terminus: Undecaprenyl-diphosphatase (266 aa).

The next 8 helical transmembrane spans lie at 1–21 (MMSW…TEFL), 43–63 (ASVF…VIYW), 81–101 (LYGI…GFLF), 107–127 (TLFT…FMLI), 145–165 (LTPK…WPGF), 183–203 (HLAA…ATGY), 219–239 (LFIT…KVFI), and 245–265 (ISLR…YLCI).

Belongs to the UppP family.

Its subcellular location is the cell membrane. The catalysed reaction is di-trans,octa-cis-undecaprenyl diphosphate + H2O = di-trans,octa-cis-undecaprenyl phosphate + phosphate + H(+). In terms of biological role, catalyzes the dephosphorylation of undecaprenyl diphosphate (UPP). Confers resistance to bacitracin. The chain is Undecaprenyl-diphosphatase from Lawsonia intracellularis (strain PHE/MN1-00).